The following is a 230-amino-acid chain: Germin-like protein 5-1 (230 aa).

Residues 1–20 (MAMVGRSLLLLLLLVTLAAG) form the signal peptide. A disulfide bridge connects residues Cys-38 and Cys-53. A Cupin type-1 domain is found at 86 to 219 (YGFTARSVDI…TLLTDEATVD (134 aa)). The Mn(2+) site is built by His-119, His-121, Glu-126, and His-167. N-linked (GlcNAc...) asparagine glycosylation occurs at Asn-172.

Belongs to the germin family. Oligomer (believed to be a pentamer but probably hexamer).

The protein localises to the secreted. It is found in the extracellular space. The protein resides in the apoplast. In terms of biological role, may play a role in plant defense. Probably has no oxalate oxidase activity even if the active site is conserved. The polypeptide is Germin-like protein 5-1 (Oryza sativa subsp. japonica (Rice)).